The primary structure comprises 216 residues: MPTPHEAEKQHTGPEEADRPPSMSSHDAAPSGPPSRNPCCLCWCCCCSCSWNQERQRAWQVSRESKLQPLPSCEVCTPPSPKEVQSWAQSFDKLMHSPTGRSVFRAFLRTEYSEENMLFWLACEELKAEANQHVVDEKARLIYEDYVSILSPKEVSLDSRVREGINRKMQEPSPHTFDDAQLQIYTLMHRDSYPRFLTSPTYRSLLLQGAPQSSEA.

A compositionally biased stretch (basic and acidic residues) spans 1–19; that stretch reads MPTPHEAEKQHTGPEEADR. The tract at residues 1 to 30 is disordered; that stretch reads MPTPHEAEKQHTGPEEADRPPSMSSHDAAP. Residues S24 and S97 each carry the phosphoserine modification. An RGS domain is found at 90 to 206; it reads SFDKLMHSPT…LTSPTYRSLL (117 aa). A Phosphoserine; by MAPK1 and MAPK3 modification is found at S151. An interaction with GIPC region spans residues 207 to 216; the sequence is LQGAPQSSEA.

As to quaternary structure, interacts with GIPC PDZ domain. Interacts with GNAO1. In terms of processing, fatty acylated. Heavily palmitoylated in the cysteine string motif. Post-translationally, phosphorylated, mainly on serine residues.

The protein resides in the membrane. Inhibits signal transduction by increasing the GTPase activity of G protein alpha subunits thereby driving them into their inactive GDP-bound form. Binds to G-alpha subfamily 1 members, with the order G(i)a3 &gt; G(i)a1 &gt; G(o)a &gt;&gt; G(z)a/G(i)a2. Activity on G(z)-alpha is inhibited by phosphorylation and palmitoylation of the G-protein. This Mus musculus (Mouse) protein is Regulator of G-protein signaling 19 (Rgs19).